The following is a 203-amino-acid chain: Somatotropin (203 aa).

The first 17 residues, 1 to 17 (MDRVVIVLSVLSVAASS), serve as a signal peptide directing secretion. Gln18 bears the Pyrrolidone carboxylic acid mark. His35 is a binding site for Zn(2+). An intrachain disulfide couples Cys68 to Cys176. Glu185 contacts Zn(2+). Cys193 and Cys201 are joined by a disulfide.

It belongs to the somatotropin/prolactin family.

Its subcellular location is the secreted. Functionally, growth hormone plays an important role in growth control and is involved in the regulation of several anabolic processes. Implicated as an osmoregulatory substance important for seawater adaptation. The polypeptide is Somatotropin (gh) (Solea senegalensis (Senegalese sole)).